Reading from the N-terminus, the 473-residue chain is Serine palmitoyltransferase 1 (473 aa).

The Lumenal portion of the chain corresponds to 1–15 (MAMAAEQWVLVEMVQ). The segment at 1-66 (MAMAAEQWVL…KEELIEEWQP (66 aa)) is interaction with SPTLC2. Residues 16–36 (ALYEAPAYHLILEGILILWII) form a helical membrane-spanning segment. Topologically, residues 37–473 (RLVFSKTYKL…IREAAQAVLL (437 aa)) are cytoplasmic. Tyr-164 carries the post-translational modification Phosphotyrosine; by ABL.

This sequence belongs to the class-II pyridoxal-phosphate-dependent aminotransferase family. Component of the serine palmitoyltransferase (SPT) complex, which is also composed of SPTLC2 or SPTLC3 and SPTSSA or SPTSSB. The heterodimer with SPTLC2 or SPTLC3 forms the catalytic core of the enzyme, while SPTSSA or SPTSSB subunits determine substrate specificity. SPT also interacts with ORMDL proteins, especially ORMDL3, which negatively regulate SPT activity in the presence of ceramides. Forms dimers of heterodimers with SPTLC2. Interacts with RTN4. Pyridoxal 5'-phosphate serves as cofactor. Post-translationally, phosphorylation at Tyr-164 inhibits activity and promotes cell survival.

The protein localises to the endoplasmic reticulum membrane. It catalyses the reaction L-serine + hexadecanoyl-CoA + H(+) = 3-oxosphinganine + CO2 + CoA. It carries out the reaction octadecanoyl-CoA + L-serine + H(+) = 3-oxoeicosasphinganine + CO2 + CoA. The enzyme catalyses tetradecanoyl-CoA + L-serine + H(+) = 3-oxohexadecasphinganine + CO2 + CoA. The catalysed reaction is dodecanoyl-CoA + L-serine + H(+) = 3-oxotetradecasphinganine + CO2 + CoA. It functions in the pathway lipid metabolism; sphingolipid metabolism. SPT complex catalytic activity is negatively regulated by ORMDL proteins, including ORMDL3, in the presence of ceramides. This mechanism allows to maintain ceramide levels at sufficient concentrations for the production of complex sphingolipids, but which prevents the accumulation of ceramides to levels that trigger apoptosis. Its function is as follows. Component of the serine palmitoyltransferase multisubunit enzyme (SPT) that catalyzes the initial and rate-limiting step in sphingolipid biosynthesis by condensing L-serine and activated acyl-CoA (most commonly palmitoyl-CoA) to form long-chain bases. The SPT complex is also composed of SPTLC2 or SPTLC3 and SPTSSA or SPTSSB. Within this complex, the heterodimer with SPTLC2 or SPTLC3 forms the catalytic core. The composition of the serine palmitoyltransferase (SPT) complex determines the substrate preference. The SPTLC1-SPTLC2-SPTSSA complex shows a strong preference for C16-CoA substrate, while the SPTLC1-SPTLC3-SPTSSA isozyme uses both C14-CoA and C16-CoA as substrates, with a slight preference for C14-CoA. The SPTLC1-SPTLC2-SPTSSB complex shows a strong preference for C18-CoA substrate, while the SPTLC1-SPTLC3-SPTSSB isozyme displays an ability to use a broader range of acyl-CoAs, without apparent preference. Required for adipocyte cell viability and metabolic homeostasis. The chain is Serine palmitoyltransferase 1 (SPTLC1) from Cricetulus griseus (Chinese hamster).